The sequence spans 2698 residues: Zinc finger protein 292 (2698 aa).

A C2H2-type 1 zinc finger spans residues 567–589; the sequence is YSCPICAKNFNSKDSFVPHVTLH. Ser-654 carries the post-translational modification Phosphoserine. 6 C2H2-type zinc fingers span residues 681 to 705, 722 to 744, 750 to 774, 779 to 803, 807 to 831, and 1085 to 1110; these read FNCP…VKGH, VICQ…LQMH, YICI…RKEH, AKCL…EAQH, YTCK…QDGH, and FSCQ…KTAH. Positions 822 to 834 are enriched in basic and acidic residues; sequence SEMEKHQDGHSHP. The tract at residues 822–894 is disordered; sequence SEMEKHQDGH…AEPAVTKHGQ (73 aa). Position 1104 is an N6-acetyllysine (Lys-1104). Ser-1146 carries the phosphoserine modification. Residues 1278–1325 are compositionally biased toward polar residues; it reads NSTNHYPSQTDGNINSSFLKGGSSENGVFPSQVSSADDFSSTSAQPST. The interval 1278–1349 is disordered; the sequence is NSTNHYPSQT…KERKPKHNKR (72 aa). The segment at 1361–1383 adopts a C2H2-type 8; degenerate zinc-finger fold; sequence FICSRCYRAFTNPRSLGGHLSKR. Polar residues-rich tracts occupy residues 1574-1603 and 1624-1633; these read FSSS…TRSS and SVSNTSQNVL. A disordered region spans residues 1574–1656; sequence FSSSTEPPQN…PVPDTNTRSD (83 aa). 2 consecutive C2H2-type zinc fingers follow at residues 1879–1904 and 1924–1949; these read FVCQ…GKIH and FKCV…QLVH. A disordered region spans residues 1964 to 1997; it reads PYGRKSQSENLSSPQNNQVKKQPSMAEETKTESQ. A compositionally biased stretch (polar residues) spans 1971 to 1984; it reads SENLSSPQNNQVKK. Lys-2020 is modified (N6-acetyllysine). Over residues 2021–2032 the composition is skewed to basic and acidic residues; that stretch reads QLAEKKSPEKPE. Residues 2021–2075 are disordered; sequence QLAEKKSPEKPESSSQPVTSSAEQYNANLANLKTKGRKNKRHRKEKEEKREKNPV. Polar residues predominate over residues 2038–2051; the sequence is VTSSAEQYNANLAN. A compositionally biased stretch (basic residues) spans 2054–2064; that stretch reads TKGRKNKRHRK. C2H2-type zinc fingers lie at residues 2091 to 2116, 2149 to 2174, 2193 to 2218, and 2233 to 2258; these read YCCV…QAVH, FRCQ…MKLH, FPCD…EVDH, and YKCD…FNKH. Over residues 2262-2271 the composition is skewed to basic residues; it reads HKAHLIRPRK. Positions 2262–2323 are disordered; it reads HKAHLIRPRK…KSNLENKSAK (62 aa). Residues 2362–2386 form a C2H2-type 15 zinc finger; that stretch reads YPCMIKGCTSVVTSESNIIRHYKCH. Disordered regions lie at residues 2411–2454, 2467–2553, and 2580–2608; these read GKEI…GEKD, LINE…EEHP, and KQKK…HVDK. Residues 2421–2437 are compositionally biased toward basic and acidic residues; the sequence is KNDKKDPDSSVLEKNDN. The segment covering 2470–2488 has biased composition (polar residues); sequence EDSTNAENQGNTTLKGNNE. 2 stretches are compositionally biased toward basic and acidic residues: residues 2489-2501 and 2580-2590; these read FQEH…ERQK and KQKKNSDRDHS. The segment covering 2596–2606 has biased composition (basic residues); it reads RGSHSSSRRHV.

It belongs to the krueppel C2H2-type zinc-finger protein family. In terms of tissue distribution, expressed in postnatal day 1 (P1) pituitary. Also detected in presomatotrophic cell line GHFT1-5.

It localises to the nucleus. May be involved in transcriptional regulation. This chain is Zinc finger protein 292, found in Mus musculus (Mouse).